The following is a 424-amino-acid chain: Double homeobox protein 4 (424 aa).

The segment covering 1–10 (MALPTPSDST) has biased composition (polar residues). Disordered stretches follow at residues 1–24 (MALPTPSDSTLPAEARGRGRRRRL), 72–102 (SRQLRQHRRESRPWPGRRGPPEGRRKRTAVT), 218–362 (LQPS…LQEP), and 388–414 (QPLLETEAPGELEASEEAASLEAPLSE). 2 DNA-binding regions (homeobox) span residues 19-78 (GRRR…LRQH) and 94-153 (GRRK…PGQG). The span at 265–274 (KSREDRDPQR) shows a compositional bias: basic and acidic residues. 2 stretches are compositionally biased toward low complexity: residues 278–302 (PGPCAVAQPGPAQAGPQGQGVLAPP) and 319–329 (AGAAWEPQAGA). The segment at 327-424 (AGAAPPPQPA…EEYRALLEEL (98 aa)) is required for interaction with EP300 and CREBBP, and for transcriptional activation of target genes. The segment at 405–424 (AASLEAPLSEEEYRALLEEL) is important for transcriptional activation of target genes.

It belongs to the paired homeobox family. In terms of assembly, binds DNA as a monomer. Interacts (via C-terminus) with EP300 and CREBBP. In terms of tissue distribution, isoform 1: Does not seem to be expressed in normal muscle, but is detected in muscle of individuals with FSHD, and also in testis (at protein level). Isoform 1: Does not seem to be expressed in normal muscle, but in muscle of individuals with FSHD, where it may be toxic to cells. Isoform 2: Detected in skeletal muscle, fibroblasts and testis from healthy individuals.

It localises to the nucleus. The protein resides in the cytoplasm. Transcription factor that is selectively and transiently expressed in cleavage-stage embryos. Binds to double-stranded DNA elements with the consensus sequence 5'-TAATCTAATCA-3'. Binds to chromatin containing histone H3 acetylated at 'Lys-27' (H3K27ac) and promotes deacetylation of H3K27ac. In parallel, binds to chromatin that lacks histone H3 acetylation at 'Lys-27' (H3K27ac) and recruits EP300 and CREBBP to promote acetylation of histone H3 at 'Lys-27' at new sites. Involved in transcriptional regulation of numerous genes, primarily as transcriptional activator, but also mediates repression of a set of target genes. Promotes expression of ZSCAN4 and KDM4E, two proteins with essential roles during early embryogenesis. Promotes nuclear translocation of CTNNB1/beta-catenin and its subsequent activation of target genes. Heterologous expression in cultured embryonic stem cells mediates transcription of HERVL retrotransposons and transcripts derived from ACRO1 and HSATII satellite repeats. May activate expression of PITX1. May regulate microRNA (miRNA) expression. Inappropriate expression can inhibit myogenesis and promote apoptosis. Functionally, probably inactive as a transcriptional activator, due to the absence of the C-terminal region that is important for transcriptional activation. Can inhibit transcriptional activation mediated by isoform 1. Heterologous expression of isoform 2 has no deleterious effect on cell survival. This is Double homeobox protein 4 from Homo sapiens (Human).